We begin with the raw amino-acid sequence, 1375 residues long: uncharacterized protein (1375 aa).

Residues 277–476 form the Helicase ATP-binding domain; sequence LLASGDIRGG…FGLLFLLRYS (200 aa). 290-297 is an ATP binding site; that stretch reads DEMGMGKT. The RING-type zinc-finger motif lies at 1092-1130; the sequence is CIICRDIIKQGFITTCGHLYCSFCLEAWLKHSSSCPMCK. In terms of domain architecture, Helicase C-terminal spans 1190–1336; sequence TISKHLLYLK…QLDKLGLDVP (147 aa).

It belongs to the SNF2/RAD54 helicase family.

It is found in the nucleus. This is an uncharacterized protein from Schizosaccharomyces pombe (strain 972 / ATCC 24843) (Fission yeast).